The following is a 344-amino-acid chain: SAGA complex subunit Sgf73 (344 aa).

Residues 123-143 are compositionally biased toward polar residues; sequence NKDVNNGNNAPIKNGVKSTAK. Residues 123-196 are disordered; it reads NKDVNNGNNA…KKKNPKVKGP (74 aa). The 67-residue stretch at 190–256 folds into the SCA7 domain; sequence NPKVKGPVDV…KNQVKIQRQI (67 aa).

This sequence belongs to the ataxin-7 family. As to quaternary structure, component of the 1.8 MDa SAGA (Spt-Ada-Gcn5 acetyltransferase) complex, which is composed of 19 subunits tra1, spt7, taf5, ngg1/ada3, sgf73, spt20, spt8, taf12, taf6, hfi1/ada1, ubp8, gcn5, ada2, spt3, sgf29, taf10, taf9, sgf11 and sus1. The SAGA complex is composed of 4 modules, namely the HAT (histone acetyltransferase) module (gcn5, ada2, ngg1/ada3 and sgf29), the DUB (deubiquitinating) module (ubp8, sgf11, sgf73 and sus1), the core or TAF (TBP-associated factor) module (taf5, taf6, taf9, taf10 and taf12), and the Tra1 or SPT (Suppressor of Ty) module (tra1, hfi1/ada1, spt3, spt7, spt8 and spt20). The Tra1/SPT module binds activators, the core module recruits TBP (TATA-binding protein), the HAT module contains the histone H3 acetyltransferase gcn5, and the DUB module comprises the histone H2B deubiquitinase ubp8. Interacts with the RITS subunits ago1 and chp1.

It is found in the nucleus. In terms of biological role, component of the transcription coactivator SAGA complex. SAGA acts as a general cofactor required for essentially all RNA polymerase II transcription. At the promoters, SAGA is required for transcription pre-initiation complex (PIC) recruitment. It influences RNA polymerase II transcriptional activity through different activities such as TBP interaction (via core/TAF module) and promoter selectivity, interaction with transcription activators (via Tra1/SPT module), and chromatin modification through histone acetylation (via HAT module) and deubiquitination (via DUB module). SAGA preferentially acetylates histones H3 (to form H3K9ac, H3K14ac, H3K18ac and H3K23ac) and H2B and deubiquitinates histone H2B. SAGA interacts with DNA via upstream activating sequences (UASs). Sgf73 tethers the DUB module to the rest of the SAGA complex through its central domain and activates the ubiquitin hydrolase ubp8 by maintaining its catalytic domain in an active conformation. Sgf73 mediates recruitment of the TREX-2 mRNA export factors sac3 and thp1 to SAGA, which is crucial to target TREX-2 to the nuclear pore complex (NPC) necessary for export of mRNA. Upon environmental stress, involved in the bypass of the canonical mRNA export process for the immediate export of stress-related transcripts to maintain proteostasis. Independent on its function in SAGA, promotes the assembly of the RNA-induced transcriptional silencing complex (RITS) and is required for pericentromeric heterochromatin silencing and the generation of siRNA. The sequence is that of SAGA complex subunit Sgf73 (sgf73) from Schizosaccharomyces pombe (strain 972 / ATCC 24843) (Fission yeast).